Here is an 898-residue protein sequence, read N- to C-terminus: Dipeptidyl peptidase 8 (898 aa).

Catalysis depends on charge relay system residues Ser-755, Asp-833, and His-865.

It belongs to the peptidase S9B family. DPPIV subfamily. As to quaternary structure, homodimer. Forms a ternary complex with NLRP1, composed of a DPP8 homodimer, one full-length NLRP1 protein, and one cleaved C-terminus of NLRP1 (NACHT, LRR and PYD domains-containing protein 1, C-terminus). Forms a ternary complex with CARD8, composed of a DPP8 homodimer, one full-length NLRP1 protein, and one cleaved C-terminus of CARD8 (Caspase recruitment domain-containing protein 8, C-terminus). In the ternary complex, only one subunit of the DPP8 homodimer is bound to NLRP1 or CARD8. In terms of tissue distribution, ubiquitously expressed, with highest levels in testis, placenta, prostate, muscle and brain.

Its subcellular location is the cytoplasm. The enzyme catalyses Release of an N-terminal dipeptide, Xaa-Yaa-|-Zaa-, from a polypeptide, preferentially when Yaa is Pro, provided Zaa is neither Pro nor hydroxyproline.. Inhibited by zinc. Inhibited by the serine proteinase inhibitor 4-(2-aminoethyl)benzenesulphonyl fluoride (AEBSF), and by di-isopropylfluorophosphate. Specifically inhibited by isoindoline derivatives. Inhibited by Val-boroPro (Talabostat, PT-100), a non-selective inhibitor, which triggers pyroptosis in monocytes and macrophages. In terms of biological role, dipeptidyl peptidase that cleaves off N-terminal dipeptides from proteins having a Pro or Ala residue at position 2. Acts as a key inhibitor of caspase-1-dependent monocyte and macrophage pyroptosis in resting cells by preventing activation of NLRP1 and CARD8. Sequesters the cleaved C-terminal part of NLRP1 and CARD8, which respectively constitute the active part of the NLRP1 and CARD8 inflammasomes, in a ternary complex, thereby preventing their oligomerization and activation. The dipeptidyl peptidase activity is required to suppress NLRP1 and CARD8; however, neither NLRP1 nor CARD8 are bona fide substrates of DPP8, suggesting the existence of substrate(s) required for NLRP1 and CARD8 inhibition. The sequence is that of Dipeptidyl peptidase 8 from Homo sapiens (Human).